The primary structure comprises 276 residues: Large ribosomal subunit protein uL2 (276 aa).

The segment at 224–276 (VMNPVDHPHGGGEGKAPIGRKSPMTPWGKPTLGYKTRKKKNKSDKFIIRRRKK) is disordered. Basic residues predominate over residues 258-276 (KTRKKKNKSDKFIIRRRKK).

It belongs to the universal ribosomal protein uL2 family. Part of the 50S ribosomal subunit. Forms a bridge to the 30S subunit in the 70S ribosome.

One of the primary rRNA binding proteins. Required for association of the 30S and 50S subunits to form the 70S ribosome, for tRNA binding and peptide bond formation. It has been suggested to have peptidyltransferase activity; this is somewhat controversial. Makes several contacts with the 16S rRNA in the 70S ribosome. The chain is Large ribosomal subunit protein uL2 from Geobacillus kaustophilus (strain HTA426).